The sequence spans 346 residues: Probable dual-specificity RNA methyltransferase RlmN (346 aa).

Glu-90 functions as the Proton acceptor in the catalytic mechanism. One can recognise a Radical SAM core domain in the interval 96–330; sequence TRDRLTVCVS…VSVRASRGLD (235 aa). Cys-103 and Cys-335 form a disulfide bridge. Residues Cys-110, Cys-114, and Cys-117 each coordinate [4Fe-4S] cluster. S-adenosyl-L-methionine contacts are provided by residues 157 to 158, Ser-187, 216 to 218, and Asn-292; these read GE and SLH. The S-methylcysteine intermediate role is filled by Cys-335.

It belongs to the radical SAM superfamily. RlmN family. Requires [4Fe-4S] cluster as cofactor.

The protein localises to the cytoplasm. The catalysed reaction is adenosine(2503) in 23S rRNA + 2 reduced [2Fe-2S]-[ferredoxin] + 2 S-adenosyl-L-methionine = 2-methyladenosine(2503) in 23S rRNA + 5'-deoxyadenosine + L-methionine + 2 oxidized [2Fe-2S]-[ferredoxin] + S-adenosyl-L-homocysteine. The enzyme catalyses adenosine(37) in tRNA + 2 reduced [2Fe-2S]-[ferredoxin] + 2 S-adenosyl-L-methionine = 2-methyladenosine(37) in tRNA + 5'-deoxyadenosine + L-methionine + 2 oxidized [2Fe-2S]-[ferredoxin] + S-adenosyl-L-homocysteine. Functionally, specifically methylates position 2 of adenine 2503 in 23S rRNA and position 2 of adenine 37 in tRNAs. The chain is Probable dual-specificity RNA methyltransferase RlmN from Synechococcus sp. (strain RCC307).